We begin with the raw amino-acid sequence, 1066 residues long: MTPMSENNGSENTRDVSAAMMKSRSNSSEYAGGDGSFHASEVESQSSQGASGGNTSASKRRTKASRACDQCRKRKIRCDYDDDKGVCTSCRKNGESCAFERIQLKRGPSKGAVRGHSVSRSISGENNNTAATAVGSGGEFSSPSSRQGSVLLPPLGQYLPQPAPVPSNLNATQQQQFWKVPYHDFQGQRRGSIDSLSSDMSAKSVNIPQEHLLYASPSAGHPPLHSPVTFGPNNSSTDSGYWPFRNSGGEESDELRRKSGSNPPSLKNVSQPPPPPLQQQQQQQYSYSKFNNSFAQYGANGFPSRHGSIASEGMSPSASVPYQSVPMNQSNSNGLSQQQQQPIQWPKVQPKNLPPPQVQVQAADKEETLGNSFQKTIKKRRTVSASSGENKAEPGEYPLARFSSSGNDSLLGGNLVSPAGFVYGQIPEIQLIDIYYEFIHMVFPIIPLNKETVTNEILLVNTQPISPIHEINNYVILWFRNSLELLIRITLKRRSGHFYDSLTHSKERELSNEIRGNSNGGGSNDSKDDNLEMQGVFVTALNECLQKIVDIHPSFRENKDKISPKVKIIYLSTFVLLNYILAVVGYDNSFVLGMSTTIFKDFKVYELLLYDDEDDDATKSGSNDNDNTNNDNNSNNANNDNNDSRFYDENNAMNWDQAGYSITFKRLYVLLIIFDSLQCCSYGGPKLLNVPIEGASERFFQTKPHSNSKWVVDQSPTRMKFILQSVKFGELLAECSMKRRSICDLSRTQLTWEIPPYFLKGVTDEDDELFSLAQLLAAFILIRKEFVDCLLNLQDLETGELPTVDMELCGELIKLLCQLTSIILQALTVMMRTNPKNHIDYNYRPMKPMEHDDSGNSASRKFTTSQAESGKNSGNDFYHKLLGLQDNAEACLTNLLRGSISPYCISMLREIRNVMELVKKMPASLIGVVMACAGTHHNTANNNNNDPLAITFQSQELVVKLSNCMNDMMQITSLLNMIKPVNLSDQDSDNTSATATITTTETISKSLNRDHSIMRRLYYSKAAKRDKKHIYPSSSSSPQLQETITTLKSFVLIGWKLLDDFELGWS.

Polar residues-rich tracts occupy residues Met1 to Glu11 and Val42 to Ala57. Disordered regions lie at residues Met1–Gln70, Pro108–Pro153, Tyr214–Tyr285, Gly298–Leu399, Asp616–Arg645, and Met849–Lys871. The zn(2)-C6 fungal-type DNA-binding region spans Cys68–Cys97. Composition is skewed to polar residues over residues Val118–Ala131, Glu139–Gly148, Gly260–Ser270, and Met314–Met327. Low complexity-rich tracts occupy residues Asn328–Pro350 and Ser622–Asn641. Over residues Gly855–Lys871 the composition is skewed to polar residues.

It belongs to the EDS1/RGT1 family.

Its subcellular location is the nucleus. The protein localises to the cytoplasm. Functionally, glucose-responsive transcription factor that regulates expression of several glucose transporter (HXT) genes in response to glucose. In the absence of glucose, it functions as a transcriptional repressor, whereas high concentrations of glucose cause it to function as a transcriptional activator. In cells growing on low levels of glucose, has a neutral role, neither repressing nor activating transcription. The sequence is that of Glucose transport transcription regulator RGT1 (RGT1) from Zygosaccharomyces rouxii (strain ATCC 2623 / CBS 732 / NBRC 1130 / NCYC 568 / NRRL Y-229).